A 557-amino-acid polypeptide reads, in one-letter code: Leucine-rich glioma-inactivated protein 1 (557 aa).

An N-terminal signal peptide occupies residues 1–34; it reads MESESSRRMGNACIPLKRIAYFLCLFSVVLLTEG. The 38-residue stretch at 35–72 folds into the LRRNT domain; it reads KKPAKPKCPAVCTCSKDNALCENARSIPRTVPPDVISL. 3 LRR repeats span residues 92-113, 116-137, and 140-161; these read SLQL…AFIG, HLEY…TFRG, and SLIH…IFKG. An LRRCT domain is found at 173 to 223; sequence NAFNCDCKLKWLVEWLGHTNATVEDIYCEGPPEYKKRKINSLSPKDFDCII. A glycan (N-linked (GlcNAc...) asparagine) is linked at Asn192. EAR repeat units follow at residues 225–267, 271–313, 317–364, 366–415, 419–462, 464–506, and 510–552; these read EFAK…EWDH, TFRN…KRDG, KFIK…KWNG, GFYS…QWSK, LFTN…KWGG, SFQD…NWDA, and KFVK…KHVI. N-linked (GlcNAc...) asparagine glycosylation is present at Asn277. A glycan (N-linked (GlcNAc...) asparagine) is linked at Asn422.

Oligomer. Interacts with KCNA1 within a complex containing KCNA1, KCNA4 and KCNAB1. Part of a complex containing ADAM22, DLG4/PSD95 and CACNG2 (stargazin). Can bind to ADAM11 and ADAM23. Glycosylated. As to expression, expressed in the brain (at protein level). Expressed in cerebellar cortex basket cell terminals (at protein level). Highly expressed in the dentate gyrus and CA3 field of the hippocampus.

It localises to the secreted. It is found in the synapse. The protein resides in the cytoplasm. The protein localises to the golgi apparatus. Its subcellular location is the endoplasmic reticulum. Regulates voltage-gated potassium channels assembled from KCNA1, KCNA4 and KCNAB1. It slows down channel inactivation by precluding channel closure mediated by the KCNAB1 subunit. Ligand for ADAM22 that positively regulates synaptic transmission mediated by AMPA-type glutamate receptors. Plays a role in suppressing the production of MMP1/3 through the phosphatidylinositol 3-kinase/ERK pathway. The protein is Leucine-rich glioma-inactivated protein 1 of Mus musculus (Mouse).